A 450-amino-acid polypeptide reads, in one-letter code: MVNSKRQQRSKKVASSSKVPPTKGRTFTGCWACRFKKRRCDENRPICSLCAKHGDNCSYDIRLMWLEENIYKVRKHSLISSLQARKSKSKPLCQKISKSRFKQMTHFRQLSPPTSDCEDSVHEASKETTLPNDNTFTISVRRLKIYNNAVASVFGSMTNRDYTQKRIDKKLDELLNMVENDISVVNLNCSKHGPYSVFRANPAAVTSALTDQLPSPGHSMSSAEETTTAALSSPPEDSTSLIDIIQGKIFGILWFNCYGNMILNRQEYTTWFINKMRNSLTTEFIRFLGKIIDDPDINMASCLFKECIARWSCVDWQSIAITMLVIIHGYTCPNLTKLLRVWFLQQKLLRFSMYPLVNFIINNTQDLDVLYHCNGLLGNADLFEDPYQDELTSELHVLVTERLVNSWKDTILQQLCSCQDTTLSCSQLRYWQLQLKCNQQFYKDVYAMQD.

Positions 1-12 (MVNSKRQQRSKK) are enriched in basic residues. Positions 1 to 23 (MVNSKRQQRSKKVASSSKVPPTK) are disordered. The span at 13-23 (VASSSKVPPTK) shows a compositional bias: low complexity. The zn(2)-C6 fungal-type DNA-binding region spans 30-57 (CWACRFKKRRCDENRPICSLCAKHGDNC). The tract at residues 210 to 234 (TDQLPSPGHSMSSAEETTTAALSSP) is disordered.

Its subcellular location is the nucleus. Functionally, positive regulator of thiamine biosynthesis. In Saccharomyces cerevisiae (strain ATCC 204508 / S288c) (Baker's yeast), this protein is Thiamine biosynthesis regulatory protein (THI2).